The primary structure comprises 324 residues: Probable pectinesterase A (324 aa).

The signal sequence occupies residues 1–19 (MHGSLLKLALLSFSLGSSA). A substrate-binding site is contributed by glutamine 142. Aspartate 165 serves as the catalytic Proton donor. Aspartate 186 (nucleophile) is an active-site residue. Residues arginine 246 and tryptophan 248 each contribute to the substrate site. Asparagine 285 carries N-linked (GlcNAc...) asparagine glycosylation.

Belongs to the pectinesterase family.

It localises to the secreted. The enzyme catalyses [(1-&gt;4)-alpha-D-galacturonosyl methyl ester](n) + n H2O = [(1-&gt;4)-alpha-D-galacturonosyl](n) + n methanol + n H(+). The protein operates within glycan metabolism; pectin degradation; 2-dehydro-3-deoxy-D-gluconate from pectin: step 1/5. In terms of biological role, involved in maceration and soft-rotting of plant tissue. This is Probable pectinesterase A (pmeA) from Aspergillus oryzae (strain ATCC 42149 / RIB 40) (Yellow koji mold).